Here is a 137-residue protein sequence, read N- to C-terminus: Proofreading thioesterase EntH (137 aa).

The active-site Nucleophile or proton acceptor is Glu63.

The protein belongs to the thioesterase PaaI family. Homotetramer. Dimer of dimers. Interacts specifically with the aryl carrier protein (ArCP) domain of EntB.

Its subcellular location is the cytoplasm. Its pathway is siderophore biosynthesis; enterobactin biosynthesis. Its function is as follows. Required for optimal enterobactin synthesis. Acts as a proofreading enzyme that prevents EntB misacylation by hydrolyzing the thioester bound existing between EntB and wrongly charged molecules. The protein is Proofreading thioesterase EntH of Cronobacter turicensis (strain DSM 18703 / CCUG 55852 / LMG 23827 / z3032).